The primary structure comprises 141 residues: Meiotically up-regulated gene 118 protein (141 aa).

The segment covering 106 to 115 (LSSQKSARQP) has biased composition (polar residues). The tract at residues 106-141 (LSSQKSARQPTKTVASSSSSSSKSTTVSKSSSKSQV) is disordered. Residues 116-141 (TKTVASSSSSSSKSTTVSKSSSKSQV) are compositionally biased toward low complexity.

Its subcellular location is the nucleus. Its function is as follows. Has a role in meiosis. This Schizosaccharomyces pombe (strain 972 / ATCC 24843) (Fission yeast) protein is Meiotically up-regulated gene 118 protein (mug118).